A 72-amino-acid chain; its full sequence is Large ribosomal subunit protein uL29 (72 aa).

This sequence belongs to the universal ribosomal protein uL29 family.

The polypeptide is Large ribosomal subunit protein uL29 (Prochlorococcus marinus (strain MIT 9515)).